A 211-amino-acid polypeptide reads, in one-letter code: Neuroendocrine protein 7B2 (211 aa).

A signal peptide spans 1-26 (MVSRMVSTMLSGLLFWLASGWTPAFA). The disordered stretch occupies residues 106-132 (DFSEDQGYPDPPNPCPVGKTDDGCLEN). A disulfide bridge connects residues C120 and C129. Phosphoserine occurs at positions 140 and 204. Residues 173–211 (GGERRKRRSVNPYLQGQRLDNVVAKKSVPHFSDEDKDPE) are disordered.

The protein belongs to the 7B2 family. In terms of assembly, interacts with PCSK2/PC2 early in the secretory pathway. Dissociation occurs at later stages. In terms of processing, proteolytically cleaved in the Golgi by a furin-like convertase to generate bioactive peptides. Sulfated on tyrosine residues.

Its subcellular location is the secreted. Functionally, acts as a molecular chaperone for PCSK2/PC2, preventing its premature activation in the regulated secretory pathway. Binds to inactive PCSK2 in the endoplasmic reticulum and facilitates its transport from there to later compartments of the secretory pathway where it is proteolytically matured and activated. Also required for cleavage of PCSK2 but does not appear to be involved in its folding. Plays a role in regulating pituitary hormone secretion. The C-terminal peptide inhibits PCSK2 in vitro. The sequence is that of Neuroendocrine protein 7B2 (SCG5) from Pan troglodytes (Chimpanzee).